Here is a 337-residue protein sequence, read N- to C-terminus: Probable cytosolic iron-sulfur protein assembly protein Ciao1 (337 aa).

7 WD repeats span residues 12–51, 58–97, 102–141, 147–186, 193–232, 251–290, and 301–337; these read GHRG…RWVA, GHSR…FECN, GHEN…EYEC, THTQ…SDWS, SHES…NEFG, YHSR…SPHE, and AHSQ…EPEE.

Belongs to the WD repeat CIA1 family.

Essential component of the cytosolic iron-sulfur (Fe/S) protein assembly machinery. Required for the maturation of extramitochondrial Fe/S proteins. The protein is Probable cytosolic iron-sulfur protein assembly protein Ciao1 of Aedes aegypti (Yellowfever mosquito).